Consider the following 493-residue polypeptide: 3-octaprenyl-4-hydroxybenzoate carboxy-lyase (493 aa).

Position 172 (Asn172) interacts with Mn(2+). Residues 175–177 (IYR), 189–191 (RWL), and 194–195 (RG) contribute to the prenylated FMN site. Glu238 is a binding site for Mn(2+). Asp287 acts as the Proton donor in catalysis.

Belongs to the UbiD family. Homohexamer. Prenylated FMN serves as cofactor. Requires Mn(2+) as cofactor.

It localises to the cell membrane. It carries out the reaction a 4-hydroxy-3-(all-trans-polyprenyl)benzoate + H(+) = a 2-(all-trans-polyprenyl)phenol + CO2. It functions in the pathway cofactor biosynthesis; ubiquinone biosynthesis. In terms of biological role, catalyzes the decarboxylation of 3-octaprenyl-4-hydroxy benzoate to 2-octaprenylphenol, an intermediate step in ubiquinone biosynthesis. This chain is 3-octaprenyl-4-hydroxybenzoate carboxy-lyase, found in Shewanella pealeana (strain ATCC 700345 / ANG-SQ1).